We begin with the raw amino-acid sequence, 407 residues long: Biflaviolin synthase CYP158A1 (407 aa).

Residues 1–11 (MTQETTTLTGQ) are compositionally biased toward polar residues. Positions 1-20 (MTQETTTLTGQSPPPVRDWP) are disordered. Flaviolin-binding positions include Arg-92, Tyr-199, and 290 to 291 (HR). A heme-binding site is contributed by Cys-356.

This sequence belongs to the cytochrome P450 family. Requires heme as cofactor.

It catalyses the reaction 2 flaviolin + 2 reduced [2Fe-2S]-[ferredoxin] + O2 + H(+) = 3,3'-biflaviolin + 2 oxidized [2Fe-2S]-[ferredoxin] + 2 H2O. It carries out the reaction 2 flaviolin + 2 reduced [2Fe-2S]-[ferredoxin] + O2 + H(+) = 3,8'-biflaviolin + 2 oxidized [2Fe-2S]-[ferredoxin] + 2 H2O. It functions in the pathway pigment biosynthesis. Functionally, catalyzes oxidative C-C coupling reaction to polymerize flaviolin and form highly conjugated pigments which protect the soil bacterium from deleterious effects of UV irradiation (two isomers of biflaviolin and one triflaviolin). In Streptomyces coelicolor (strain ATCC BAA-471 / A3(2) / M145), this protein is Biflaviolin synthase CYP158A1.